A 1471-amino-acid chain; its full sequence is Gag-Pol polyprotein (1471 aa).

G2 carries the N-myristoyl glycine; by host lipid modification. Residues 7–31 are interaction with Gp41; it reads VLSGKKTDELEKVRLRPGGKKRYCL. A Nuclear export signal motif is present at residues 16–22; that stretch reads LEKVRLR. The Nuclear localization signal motif lies at 26-32; it reads KKRYCLK. Residues 105–114 are compositionally biased toward basic and acidic residues; sequence QRHLAADTEK. The interval 105–130 is disordered; sequence QRHLAADTEKMPATSRPTAPPSGGNY. Y130 is subject to Phosphotyrosine; by host. Residues 186-223 are interaction with human PPIA/CYPA and NUP153; the sequence is NCVGDHQAAMQIIREIINEEAADWDQQHPIPGPLPAGQ. The tract at residues 274-360 is dimerization/Multimerization of capsid protein p24; sequence YNPTNILDIK…GGPGQKARLM (87 aa). 2 CCHC-type zinc fingers span residues 388-405 and 409-426; these read VTCWNCGKVGHTAKQCRA and QGCWKCGKQGHIMSKCPE. The disordered stretch occupies residues 441 to 508; it reads ASQLPHDPSA…PRETLQGGDR (68 aa). Over residues 484–501 the composition is skewed to basic and acidic residues; it reads DAEKLHEDGETAEREPRE. The dimerization of protease stretch occupies residues 513-517; it reads PQFSL. The Peptidase A2 domain occupies 533–602; sequence EVLLDTGADD…PINIFGRNIL (70 aa). D537 acts as the For protease activity; shared with dimeric partner in catalysis. 2 dimerization of protease regions span residues 561–567 and 600–612; these read GIGGFIN and NILNTLGMTLNFP. The Reverse transcriptase domain maps to 656–846; it reads GQLEEAPPTN…PFKWMGYELW (191 aa). D721, D796, and D797 together coordinate Mg(2+). Positions 838 to 846 are RT 'primer grip'; the sequence is FKWMGYELW. Positions 1008–1024 match the Tryptophan repeat motif motif; sequence WDQWWTDYWQVTWIPEW. Residues 1044 to 1167 form the RNase H type-1 domain; the sequence is LEKVETYYTD…VDHLVSQGIR (124 aa). Mg(2+) contacts are provided by D1053, E1088, D1108, and D1159. The Integrase-type zinc-finger motif lies at 1173–1214; sequence EKIEPAQEEHEKYHGNVKELVHKFGLPQLVAKQIVNSCDKCQ. 4 residues coordinate Zn(2+): H1182, H1186, C1210, and C1213. The 152-residue stretch at 1224–1375 folds into the Integrase catalytic domain; it reads VNAELGTWQM…PAERLVNMIT (152 aa). Positions 1234, 1286, and 1322 each coordinate Mg(2+). The segment at residues 1393-1440 is a DNA-binding region (integrase-type); the sequence is FQVYYREGRDQLWKGPGELLWKGEGAVLIKVGTEIKVIPRRKAKIIRH.

In terms of assembly, homotrimer; further assembles as hexamers of trimers. Interacts with gp41 (via C-terminus). Interacts with host CALM1; this interaction induces a conformational change in the Matrix protein, triggering exposure of the myristate group. Interacts with host AP3D1; this interaction allows the polyprotein trafficking to multivesicular bodies during virus assembly. Part of the pre-integration complex (PIC) which is composed of viral genome, matrix protein, Vpr and integrase. As to quaternary structure, homodimer; the homodimer further multimerizes as homohexamers or homopentamers. Interacts with human PPIA/CYPA. Interacts with human NUP153. Interacts with host PDZD8; this interaction stabilizes the capsid. Interacts with monkey TRIM5; this interaction destabilizes the capsid. Homodimer, whose active site consists of two apposed aspartic acid residues. In terms of assembly, heterodimer of p66 RT and p51 RT (RT p66/p51). Heterodimerization of RT is essential for DNA polymerase activity. The overall folding of the subdomains is similar in p66 RT and p51 RT but the spatial arrangements of the subdomains are dramatically different. As to quaternary structure, homotetramer; may further associate as a homohexadecamer. Part of the pre-integration complex (PIC) which is composed of viral genome, matrix protein, Vpr and integrase. Interacts with human SMARCB1/INI1 and human PSIP1/LEDGF isoform 1. Interacts with human KPNA3; this interaction might play a role in nuclear import of the pre-integration complex. Interacts with human NUP153; this interaction might play a role in nuclear import of the pre-integration complex. It depends on Mg(2+) as a cofactor. In terms of processing, specific enzymatic cleavages by the viral protease yield mature proteins. The protease is released by autocatalytic cleavage. The polyprotein is cleaved during and after budding, this process is termed maturation. Proteolytic cleavage of p66 RT removes the RNase H domain to yield the p51 RT subunit. Nucleocapsid protein p7 might be further cleaved after virus entry.

Its subcellular location is the host cell membrane. The protein localises to the host endosome. It is found in the host multivesicular body. The protein resides in the virion membrane. It localises to the host nucleus. Its subcellular location is the host cytoplasm. The protein localises to the virion. It catalyses the reaction Endopeptidase for which the P1 residue is preferably hydrophobic.. The enzyme catalyses Endohydrolysis of RNA in RNA/DNA hybrids. Three different cleavage modes: 1. sequence-specific internal cleavage of RNA. Human immunodeficiency virus type 1 and Moloney murine leukemia virus enzymes prefer to cleave the RNA strand one nucleotide away from the RNA-DNA junction. 2. RNA 5'-end directed cleavage 13-19 nucleotides from the RNA end. 3. DNA 3'-end directed cleavage 15-20 nucleotides away from the primer terminus.. It carries out the reaction 3'-end directed exonucleolytic cleavage of viral RNA-DNA hybrid.. The catalysed reaction is DNA(n) + a 2'-deoxyribonucleoside 5'-triphosphate = DNA(n+1) + diphosphate. Its activity is regulated as follows. Protease: The viral protease is inhibited by many synthetic protease inhibitors (PIs), such as amprenavir, atazanavir, indinavir, loprinavir, nelfinavir, ritonavir and saquinavir. Use of protease inhibitors in tritherapy regimens permit more ambitious therapeutic strategies. Reverse transcriptase/ribonuclease H: RT can be inhibited either by nucleoside RT inhibitors (NRTIs) or by non nucleoside RT inhibitors (NNRTIs). NRTIs act as chain terminators, whereas NNRTIs inhibit DNA polymerization by binding a small hydrophobic pocket near the RT active site and inducing an allosteric change in this region. Classical NRTIs are abacavir, adefovir (PMEA), didanosine (ddI), lamivudine (3TC), stavudine (d4T), tenofovir (PMPA), zalcitabine (ddC), and zidovudine (AZT). Classical NNRTIs are atevirdine (BHAP U-87201E), delavirdine, efavirenz (DMP-266), emivirine (I-EBU), and nevirapine (BI-RG-587). The tritherapies used as a basic effective treatment of AIDS associate two NRTIs and one NNRTI. Functionally, mediates, with Gag polyprotein, the essential events in virion assembly, including binding the plasma membrane, making the protein-protein interactions necessary to create spherical particles, recruiting the viral Env proteins, and packaging the genomic RNA via direct interactions with the RNA packaging sequence (Psi). Gag-Pol polyprotein may regulate its own translation, by the binding genomic RNA in the 5'-UTR. At low concentration, the polyprotein would promote translation, whereas at high concentration, the polyprotein would encapsidate genomic RNA and then shut off translation. Targets the polyprotein to the plasma membrane via a multipartite membrane-binding signal, that includes its myristoylated N-terminus. Matrix protein is part of the pre-integration complex. Implicated in the release from host cell mediated by Vpu. Binds to RNA. Its function is as follows. Forms the conical core that encapsulates the genomic RNA-nucleocapsid complex in the virion. Most core are conical, with only 7% tubular. The core is constituted by capsid protein hexamer subunits. The core is disassembled soon after virion entry. Host restriction factors such as TRIM5-alpha or TRIMCyp bind retroviral capsids and cause premature capsid disassembly, leading to blocks in reverse transcription. Capsid restriction by TRIM5 is one of the factors which restricts HIV-1 to the human species. Host PIN1 apparently facilitates the virion uncoating. On the other hand, interactions with PDZD8 or CYPA stabilize the capsid. In terms of biological role, encapsulates and protects viral dimeric unspliced genomic RNA (gRNA). Binds these RNAs through its zinc fingers. Acts as a nucleic acid chaperone which is involved in rearangement of nucleic acid secondary structure during gRNA retrotranscription. Also facilitates template switch leading to recombination. As part of the polyprotein, participates in gRNA dimerization, packaging, tRNA incorporation and virion assembly. Functionally, aspartyl protease that mediates proteolytic cleavages of Gag and Gag-Pol polyproteins during or shortly after the release of the virion from the plasma membrane. Cleavages take place as an ordered, step-wise cascade to yield mature proteins. This process is called maturation. Displays maximal activity during the budding process just prior to particle release from the cell. Also cleaves Nef and Vif, probably concomitantly with viral structural proteins on maturation of virus particles. Hydrolyzes host EIF4GI and PABP1 in order to shut off the capped cellular mRNA translation. The resulting inhibition of cellular protein synthesis serves to ensure maximal viral gene expression and to evade host immune response. Multifunctional enzyme that converts the viral RNA genome into dsDNA in the cytoplasm, shortly after virus entry into the cell. This enzyme displays a DNA polymerase activity that can copy either DNA or RNA templates, and a ribonuclease H (RNase H) activity that cleaves the RNA strand of RNA-DNA heteroduplexes in a partially processive 3' to 5' endonucleasic mode. Conversion of viral genomic RNA into dsDNA requires many steps. A tRNA(3)-Lys binds to the primer-binding site (PBS) situated at the 5'-end of the viral RNA. RT uses the 3' end of the tRNA primer to perform a short round of RNA-dependent minus-strand DNA synthesis. The reading proceeds through the U5 region and ends after the repeated (R) region which is present at both ends of viral RNA. The portion of the RNA-DNA heteroduplex is digested by the RNase H, resulting in a ssDNA product attached to the tRNA primer. This ssDNA/tRNA hybridizes with the identical R region situated at the 3' end of viral RNA. This template exchange, known as minus-strand DNA strong stop transfer, can be either intra- or intermolecular. RT uses the 3' end of this newly synthesized short ssDNA to perform the RNA-dependent minus-strand DNA synthesis of the whole template. RNase H digests the RNA template except for two polypurine tracts (PPTs) situated at the 5'-end and near the center of the genome. It is not clear if both polymerase and RNase H activities are simultaneous. RNase H probably can proceed both in a polymerase-dependent (RNA cut into small fragments by the same RT performing DNA synthesis) and a polymerase-independent mode (cleavage of remaining RNA fragments by free RTs). Secondly, RT performs DNA-directed plus-strand DNA synthesis using the PPTs that have not been removed by RNase H as primers. PPTs and tRNA primers are then removed by RNase H. The 3' and 5' ssDNA PBS regions hybridize to form a circular dsDNA intermediate. Strand displacement synthesis by RT to the PBS and PPT ends produces a blunt ended, linear dsDNA copy of the viral genome that includes long terminal repeats (LTRs) at both ends. Its function is as follows. Catalyzes viral DNA integration into the host chromosome, by performing a series of DNA cutting and joining reactions. This enzyme activity takes place after virion entry into a cell and reverse transcription of the RNA genome in dsDNA. The first step in the integration process is 3' processing. This step requires a complex comprising the viral genome, matrix protein, Vpr and integrase. This complex is called the pre-integration complex (PIC). The integrase protein removes 2 nucleotides from each 3' end of the viral DNA, leaving recessed CA OH's at the 3' ends. In the second step, the PIC enters cell nucleus. This process is mediated through integrase and Vpr proteins, and allows the virus to infect a non dividing cell. This ability to enter the nucleus is specific of lentiviruses, other retroviruses cannot and rely on cell division to access cell chromosomes. In the third step, termed strand transfer, the integrase protein joins the previously processed 3' ends to the 5' ends of strands of target cellular DNA at the site of integration. The 5'-ends are produced by integrase-catalyzed staggered cuts, 5 bp apart. A Y-shaped, gapped, recombination intermediate results, with the 5'-ends of the viral DNA strands and the 3' ends of target DNA strands remaining unjoined, flanking a gap of 5 bp. The last step is viral DNA integration into host chromosome. This involves host DNA repair synthesis in which the 5 bp gaps between the unjoined strands are filled in and then ligated. Since this process occurs at both cuts flanking the HIV genome, a 5 bp duplication of host DNA is produced at the ends of HIV-1 integration. Alternatively, Integrase may catalyze the excision of viral DNA just after strand transfer, this is termed disintegration. This is Gag-Pol polyprotein (gag-pol) from Human immunodeficiency virus type 2 subtype B (isolate UC1) (HIV-2).